Reading from the N-terminus, the 418-residue chain is Oxalate:formate antiporter (418 aa).

A run of 12 helical transmembrane segments spans residues 17–37, 48–68, 84–104, 108–128, 141–161, 172–192, 222–242, 250–270, 288–308, 311–331, 350–370, and 378–398; these read WFYLVLAVLLMCMISGVQYSW, LGVSLAAVQTAFTLSQVIQAG, IPLMFGGAMVLAGWTFMGMVD, ALYALYTLAGAGVGIVYGIAM, LASGFTAAGYGLGVLPFLPLI, AAFMYTGLIMGILIILIAFVI, FWVLWTAFFSVNFGGLLLVAN, LGLAAGVLTIGVSIQNLFNGG, MSVVFGINAVVLALFPTIAAL, VAFIAMLAIAFFTWGGSYALF, FFWAAKATASIFGGGLGAAIA, and AFLITAITSFIAFALATFVIP. Lysine 355 is an oxalate binding site.

This sequence belongs to the major facilitator superfamily. OFA (TC 2.A.1.11) family. Monomer.

Its subcellular location is the cell inner membrane. Its function is as follows. Anion transporter that carries out the exchange of divalent oxalate with monovalent formate, the product of oxalate decarboxylation, at the plasma membrane, and in doing so catalyzes the vectorial portion of a proton-motive metabolic cycle that drives ATP synthesis. The chain is Oxalate:formate antiporter (oxlT) from Oxalobacter formigenes.